The following is a 380-amino-acid chain: 3-isopropylmalate dehydratase large subunit 2 (380 aa).

[4Fe-4S] cluster-binding residues include C262, C320, and C323.

The protein belongs to the aconitase/IPM isomerase family. LeuC type 2 subfamily. In terms of assembly, heterodimer of LeuC and LeuD. The cofactor is [4Fe-4S] cluster.

It carries out the reaction (2R,3S)-3-isopropylmalate = (2S)-2-isopropylmalate. Its pathway is amino-acid biosynthesis; L-leucine biosynthesis; L-leucine from 3-methyl-2-oxobutanoate: step 2/4. In terms of biological role, catalyzes the isomerization between 2-isopropylmalate and 3-isopropylmalate, via the formation of 2-isopropylmaleate. The sequence is that of 3-isopropylmalate dehydratase large subunit 2 from Pyrococcus furiosus (strain ATCC 43587 / DSM 3638 / JCM 8422 / Vc1).